Reading from the N-terminus, the 88-residue chain is Small ribosomal subunit protein bS16c (88 aa).

It belongs to the bacterial ribosomal protein bS16 family.

It is found in the plastid. The protein resides in the chloroplast. This Coffea arabica (Arabian coffee) protein is Small ribosomal subunit protein bS16c.